A 387-amino-acid polypeptide reads, in one-letter code: MKKATVICDMQFGSTGKGLIAGFLAERDQPDVVVTAWSANAGHTYINREGRKWVHCMLANGIVSPKLKAVLIGGGSQMSIPTLISEIMGSLDILQGKSILIHENACIIQQRHVEEEAGPMTKIGSTKKGCGAAMMEKIRRNPESKIVAKDFIDDGLEIPDFKLDGTVGFKDISRHFEELGVCIKVVSNEVYLAVLHKAERVQVEGAQGFSLGLHNGFYPYVTSRECTPAQICSDCNVPISMVDKVVGTMRTYPIRVANRFDDEGKMVGWSGPCYSDQTELTWEQMGVTPEKTTVTKLTRRIFSFSRMQTRQAMLVCMPDEIFLNFANYCASEDELASIIEVISNEGGDVSYIGWGDSAAHIETTLEGDWSDDTNPLFNQYNKSSNIA.

The active-site Proton acceptor is the S14. ATP is bound by residues S14, T15, G16, K17, and G18. S14 contacts dGMP. Position 14 (S14) interacts with Mg(2+). N40 provides a ligand contact to dGMP. Residues G42, H43, and T44 each coordinate ATP. G42 contributes to the Mg(2+) binding site. The dGMP site is built by S125, T126, and R140. Q207 provides a ligand contact to ATP. T222 is a binding site for dGMP. T293 provides a ligand contact to Mg(2+). The L-aspartate site is built by T293, V294, and R299. Residues N324 and N327 each coordinate ATP.

This sequence belongs to the Caudovirales PurZ family. It depends on Mg(2+) as a cofactor.

The enzyme catalyses dGMP + L-aspartate + ATP = (2S)-2-amino-2'-deoxyadenylo-succinate + ADP + phosphate + 2 H(+). Its pathway is purine metabolism. Its function is as follows. Involved in the synthesis of the atypical nucleotide dZTP (2-amino-2'-deoxyadenosine-5'-triphosphate). Catalyzes the condensation of aspartate with deoxyguanylate into dSMP (N6-succino-2-amino-2'-deoxyadenylate), which undergoes defumarylation and phosphorylation respectively by host PurB and guanylate/nucleoside diphosphate kinases to give dZTP. dZTP is integrated into the viral genome instead of adenine by the viral DNA polymerase. This Z-base probably completely replaces adenosine and forms a triple bond to the opposite T-base. The resulting non-standard viral DNA is called Z-genome. The chemically modified DNA is probably harder for the host bacteria to digest with nucleases or restriction enzymes. In Acinetobacter phage SH-Ab 15497, this protein is N6-succino-2-amino-2'-deoxyadenylate synthase.